The sequence spans 205 residues: uncharacterized protein (205 aa).

A run of 5 helical transmembrane segments spans residues 4–24 (LAFLILLIVFSNLSLVNAIDD), 105–125 (KWFIAISILILGIILATLWIL), 130–150 (FLLFLAIFGLIVPFLQFKIPN), 151–171 (WLFNILALPLFVYIKFIVPEC), and 182–202 (ITIPISMYGWILIGLAVKFII).

It localises to the cell membrane. This is an uncharacterized protein from Methanocaldococcus jannaschii (strain ATCC 43067 / DSM 2661 / JAL-1 / JCM 10045 / NBRC 100440) (Methanococcus jannaschii).